A 1090-amino-acid chain; its full sequence is Protein transport protein Sec24A (1090 aa).

Disordered regions lie at residues 1 to 260 (MAQP…AHNT) and 272 to 325 (TPQL…TQTP). Residues 8–28 (AARGAAASLQAQNGAASASGS) are compositionally biased toward low complexity. 3 stretches are compositionally biased toward polar residues: residues 29-55 (PYTNGPVHNTLMSPQVSSSQGYDSQPP), 138-151 (WQYNYPSTGPQTNH), and 162-184 (GNPNLTADHQYVSSGDPALQTSF). Pro residues predominate over residues 194 to 236 (QNPPLPPTFQPGAPPGPPPAGGPPPSRGPAPQKTPPRAAPPPS). Composition is skewed to polar residues over residues 237–258 (FNSAVNQEGITSNANNGSTAAH), 274–286 (QLVNQNPKTSRSV), and 313–325 (SYPSGPQAFTQTP). Zn(2+) contacts are provided by Cys428, Cys431, Cys449, and Cys452. Positions 428–452 (CRSCRTYINPFVNFLDQRRWKCNLC) are zinc finger-like. One copy of the Gelsolin-like repeat lies at 963–1036 (PQPPILQLSV…PESARIAAFI (74 aa)).

It belongs to the SEC23/SEC24 family. SEC24 subfamily. COPII is composed of at least five proteins: the Sec23/24 complex, the Sec13/31 complex and Sar1. Interacts with TMED2. Interacts (as part of the Sec23/24 complex) with SEC22B; recruits SEC22B into COPII-coated vesicles for its transport from the endoplasmic reticulum to the Golgi. Interacts with STING1; promoting STING1 translocation to COPII vesicles in a STEEP1-dependent manner. Interacts with TMEM39A. Interacts with SACM1L; this interaction is reduced in the absence of TMEM39A. Interacts with kinase FAM20C; transport of FAM20C from the endoplasmic reticulum to the Golgi is likely to be mediated by COPII vesicles.

It localises to the cytoplasmic vesicle. Its subcellular location is the COPII-coated vesicle membrane. The protein resides in the endoplasmic reticulum membrane. It is found in the cytoplasm. The protein localises to the cytosol. Its function is as follows. Component of the coat protein complex II (COPII) which promotes the formation of transport vesicles from the endoplasmic reticulum (ER). The coat has two main functions, the physical deformation of the endoplasmic reticulum membrane into vesicles and the selection of cargo molecules for their transport to the Golgi complex. Plays a central role in cargo selection within the COPII complex and together with SEC24B may have a different specificity compared to SEC24C and SEC24D. May package preferentially cargos with cytoplasmic DxE or LxxLE motifs and may also recognize conformational epitopes. The protein is Protein transport protein Sec24A of Mus musculus (Mouse).